The sequence spans 237 residues: Ribosomal RNA small subunit methyltransferase G (237 aa).

Residues Gly-78, Phe-83, 129–130, and Arg-148 each bind S-adenosyl-L-methionine; that span reads AE.

This sequence belongs to the methyltransferase superfamily. RNA methyltransferase RsmG family.

It is found in the cytoplasm. Functionally, specifically methylates the N7 position of a guanine in 16S rRNA. The chain is Ribosomal RNA small subunit methyltransferase G from Streptococcus pyogenes serotype M49 (strain NZ131).